We begin with the raw amino-acid sequence, 450 residues long: Tubulin alpha-1 chain (450 aa).

Q11 provides a ligand contact to GTP. K40 is modified (N6-acetyllysine). GTP is bound by residues E71, S140, G144, T145, T179, N206, and N228. A Mg(2+)-binding site is contributed by E71. E254 is a catalytic residue.

This sequence belongs to the tubulin family. Dimer of alpha and beta chains. A typical microtubule is a hollow water-filled tube with an outer diameter of 25 nm and an inner diameter of 15 nM. Alpha-beta heterodimers associate head-to-tail to form protofilaments running lengthwise along the microtubule wall with the beta-tubulin subunit facing the microtubule plus end conferring a structural polarity. Microtubules usually have 13 protofilaments but different protofilament numbers can be found in some organisms and specialized cells. Interacts with Ote. The cofactor is Mg(2+). Post-translationally, undergoes a tyrosination/detyrosination cycle, the cyclic removal and re-addition of a C-terminal tyrosine residue by the enzymes tubulin tyrosine carboxypeptidase (TTCP) and tubulin tyrosine ligase (TTL), respectively. In terms of processing, acetylation of alpha chains at Lys-40 stabilizes microtubules and affects affinity and processivity of microtubule motors. This modification has a role in multiple cellular functions, ranging from cell motility, cell cycle progression or cell differentiation to intracellular trafficking and signaling. During the early stages of oogenesis lky/Alpha-tubulin N-acetyltransferase 2 is the main acetyltransferase responsible for Lys-40 acetylation in germline cells while Atat/alpha-tubulin N-acetyltransferase 1 is the main acetyltransferase responsible for Lys-40 acetylation in somatic cells.

Its subcellular location is the cytoplasm. The protein localises to the cytoskeleton. It catalyses the reaction GTP + H2O = GDP + phosphate + H(+). In terms of biological role, tubulin is the major constituent of microtubules, a cylinder consisting of laterally associated linear protofilaments composed of alpha- and beta-tubulin heterodimers. Microtubules grow by the addition of GTP-tubulin dimers to the microtubule end, where a stabilizing cap forms. Below the cap, tubulin dimers are in GDP-bound state, owing to GTPase activity of alpha-tubulin. The chain is Tubulin alpha-1 chain (alphaTub84B) from Drosophila melanogaster (Fruit fly).